The primary structure comprises 385 residues: O-phospho-L-seryl-tRNA:Cys-tRNA synthase (385 aa).

Pyridoxal 5'-phosphate is bound by residues 89-90 (AR), N195, and 218-220 (SGH). K221 is modified (N6-(pyridoxal phosphate)lysine).

It belongs to the SepCysS family. As to quaternary structure, homodimer. Interacts with SepRS. The cofactor is pyridoxal 5'-phosphate.

It carries out the reaction O-phospho-L-seryl-tRNA(Cys) + hydrogen sulfide + H(+) = L-cysteinyl-tRNA(Cys) + phosphate. Its function is as follows. Converts O-phospho-L-seryl-tRNA(Cys) (Sep-tRNA(Cys)) to L-cysteinyl-tRNA(Cys) (Cys-tRNA(Cys)). The chain is O-phospho-L-seryl-tRNA:Cys-tRNA synthase from Methanococcus aeolicus (strain ATCC BAA-1280 / DSM 17508 / OCM 812 / Nankai-3).